A 645-amino-acid polypeptide reads, in one-letter code: UvrABC system protein C (645 aa).

The GIY-YIG domain occupies 12-91 (TGPGVYLYKN…IKQRKPRFNV (80 aa)). The UVR domain occupies 202–237 (ADLERSLEVRMQEAAAAEQFELAAKYRDLLVTLHQL).

It belongs to the UvrC family. Interacts with UvrB in an incision complex.

It is found in the cytoplasm. Its function is as follows. The UvrABC repair system catalyzes the recognition and processing of DNA lesions. UvrC both incises the 5' and 3' sides of the lesion. The N-terminal half is responsible for the 3' incision and the C-terminal half is responsible for the 5' incision. The sequence is that of UvrABC system protein C from Acidobacterium capsulatum (strain ATCC 51196 / DSM 11244 / BCRC 80197 / JCM 7670 / NBRC 15755 / NCIMB 13165 / 161).